The following is a 312-amino-acid chain: Protein-methionine-sulfoxide reductase catalytic subunit MsrP (312 aa).

A signal peptide (tat-type signal) is located at residues 1 to 47 (MLIRRPPDLLPSEITPEPLARGRRALLKGLGAGAALAGLGLPQISQA). Mo-molybdopterin is bound by residues asparagine 74, 77-78 (YE), cysteine 133, threonine 168, asparagine 216, arginine 221, and 232-234 (SAK).

This sequence belongs to the MsrP family. In terms of assembly, heterodimer of a catalytic subunit (MsrP) and a heme-binding subunit (MsrQ). The cofactor is Mo-molybdopterin. Post-translationally, predicted to be exported by the Tat system. The position of the signal peptide cleavage has not been experimentally proven.

It localises to the periplasm. The catalysed reaction is L-methionyl-[protein] + a quinone + H2O = L-methionyl-(R)-S-oxide-[protein] + a quinol. Its function is as follows. Part of the MsrPQ system that repairs oxidized periplasmic proteins containing methionine sulfoxide residues (Met-O), using respiratory chain electrons. Thus protects these proteins from oxidative-stress damage caused by reactive species of oxygen and chlorine generated by the host defense mechanisms. MsrPQ is essential for the maintenance of envelope integrity under bleach stress, rescuing a wide series of structurally unrelated periplasmic proteins from methionine oxidation. The catalytic subunit MsrP is non-stereospecific, being able to reduce both (R-) and (S-) diastereoisomers of methionine sulfoxide. Involved in protection against reactive chlorine species (RCS) generated by chlorite and hypochlorite. This chain is Protein-methionine-sulfoxide reductase catalytic subunit MsrP, found in Azospira oryzae (strain ATCC BAA-33 / DSM 13638 / PS) (Dechlorosoma suillum).